The primary structure comprises 286 residues: Shikimate dehydrogenase (NADP(+)) (286 aa).

Shikimate is bound by residues 22–24 (SRS) and T71. Catalysis depends on K75, which acts as the Proton acceptor. E87 contributes to the NADP(+) binding site. Residues N96 and D111 each contribute to the shikimate site. NADP(+)-binding positions include 136-140 (GAGGA), 160-165 (NRTAAR), and I225. Y227 serves as a coordination point for shikimate. G248 contacts NADP(+).

It belongs to the shikimate dehydrogenase family. As to quaternary structure, homodimer.

It carries out the reaction shikimate + NADP(+) = 3-dehydroshikimate + NADPH + H(+). It participates in metabolic intermediate biosynthesis; chorismate biosynthesis; chorismate from D-erythrose 4-phosphate and phosphoenolpyruvate: step 4/7. Involved in the biosynthesis of the chorismate, which leads to the biosynthesis of aromatic amino acids. Catalyzes the reversible NADPH linked reduction of 3-dehydroshikimate (DHSA) to yield shikimate (SA). In Sinorhizobium fredii (strain NBRC 101917 / NGR234), this protein is Shikimate dehydrogenase (NADP(+)).